The sequence spans 156 residues: Lipoprotein signal peptidase (156 aa).

The next 3 membrane-spanning stretches (helical) occupy residues 5 to 25, 63 to 83, and 90 to 110; these read FFVV…TKQW, IEWQ…AIIA, and SNPY…GNLI. Catalysis depends on residues Asp120 and Asp138. Residues 133–153 traverse the membrane as a helical segment; it reads AFNVADMGICVGAFFVCLAVY.

Belongs to the peptidase A8 family.

The protein localises to the cell inner membrane. The catalysed reaction is Release of signal peptides from bacterial membrane prolipoproteins. Hydrolyzes -Xaa-Yaa-Zaa-|-(S,diacylglyceryl)Cys-, in which Xaa is hydrophobic (preferably Leu), and Yaa (Ala or Ser) and Zaa (Gly or Ala) have small, neutral side chains.. It functions in the pathway protein modification; lipoprotein biosynthesis (signal peptide cleavage). Its function is as follows. This protein specifically catalyzes the removal of signal peptides from prolipoproteins. This chain is Lipoprotein signal peptidase, found in Oleidesulfovibrio alaskensis (strain ATCC BAA-1058 / DSM 17464 / G20) (Desulfovibrio alaskensis).